Here is a 286-residue protein sequence, read N- to C-terminus: Ferric acinetobactin reductase (286 aa).

One can recognise an FAD-binding FR-type domain in the interval 25-131 (MEQLEMTIVS…IGPRPHFIPN (107 aa)). The FAD site is built by R79, V80, T82, D96, V98, H100, D102, S104, A106, R250, G252, and S255.

It belongs to the SIP oxidoreductase family. In terms of assembly, monomer in solution. FAD serves as cofactor.

It catalyses the reaction 2 a Fe(II)-siderophore + NAD(+) + H(+) = 2 a Fe(III)-siderophore + NADH. It carries out the reaction 2 a Fe(II)-siderophore + NADP(+) + H(+) = 2 a Fe(III)-siderophore + NADPH. In terms of biological role, ferric-siderophore reductase involved in iron removal from the siderophores after their transport into the cell. Interacts with the siderophores acinetobactin (Acb) and preacinetobactin (pre-Acb) and catalyzes the reduction of the ferric iron bound to the siderophores to ferrous iron, resulting in destabilization of the siderophore chelation complex and entrance of ferrous iron into the intracellular pool of bioavailable metals. Can use NADH and NADPH as electron donors in vitro, but the reduction rate is very slow, suggesting that NADH and NADPH are not the physiological partners of BauF. The chain is Ferric acinetobactin reductase from Acinetobacter baumannii.